The chain runs to 37 residues: Large ribosomal subunit protein bL36c (37 aa).

It belongs to the bacterial ribosomal protein bL36 family.

The protein resides in the plastid. It localises to the chloroplast. The chain is Large ribosomal subunit protein bL36c from Chloranthus spicatus (Chulantree).